A 217-amino-acid polypeptide reads, in one-letter code: MLO-like protein (217 aa).

3 helical membrane-spanning segments follow: residues 35–55 (FKVV…FLLS), 59–79 (GWVA…VVGT), and 119–139 (LVLF…AFFI).

Belongs to the MLO family.

The protein resides in the membrane. In terms of biological role, may be involved in modulation of pathogen defense and leaf cell death. The chain is MLO-like protein from Linum usitatissimum (Flax).